Here is a 113-residue protein sequence, read N- to C-terminus: U11-theraphotoxin-Hhn1e (113 aa).

Positions M1 to A21 are cleaved as a signal peptide. Positions D22 to R74 are excised as a propeptide. Basic and acidic residues predominate over residues L60–N69. Residues L60–P87 are disordered. 2 disulfide bridges follow: C75–C90 and C89–C110.

This sequence belongs to the neurotoxin 14 (magi-1) family. 01 (HNTX-16) subfamily. In terms of tissue distribution, expressed by the venom gland.

Its subcellular location is the secreted. In terms of biological role, probable ion channel inhibitor. The chain is U11-theraphotoxin-Hhn1e from Cyriopagopus hainanus (Chinese bird spider).